Consider the following 328-residue polypeptide: Ribosomal RNA small subunit methyltransferase H (328 aa).

S-adenosyl-L-methionine contacts are provided by residues 37 to 39 (GGH), Asp57, Phe83, Asp104, and Gln111.

Belongs to the methyltransferase superfamily. RsmH family.

Its subcellular location is the cytoplasm. The enzyme catalyses cytidine(1402) in 16S rRNA + S-adenosyl-L-methionine = N(4)-methylcytidine(1402) in 16S rRNA + S-adenosyl-L-homocysteine + H(+). Specifically methylates the N4 position of cytidine in position 1402 (C1402) of 16S rRNA. The protein is Ribosomal RNA small subunit methyltransferase H of Neisseria meningitidis serogroup A / serotype 4A (strain DSM 15465 / Z2491).